Here is a 236-residue protein sequence, read N- to C-terminus: Small ribosomal subunit protein eS6 (236 aa).

Phosphoserine occurs at positions 232 and 233.

Belongs to the eukaryotic ribosomal protein eS6 family. Post-translationally, phosphorylated.

This is Small ribosomal subunit protein eS6 (RPS6) from Kluyveromyces lactis (strain ATCC 8585 / CBS 2359 / DSM 70799 / NBRC 1267 / NRRL Y-1140 / WM37) (Yeast).